Consider the following 490-residue polypeptide: Protein nucleotidyltransferase YdiU (490 aa).

The ATP site is built by G89, G91, R92, K112, D124, G125, R175, and R182. Residue D251 is the Proton acceptor of the active site. Positions 252 and 261 each coordinate Mg(2+). D261 lines the ATP pocket.

This sequence belongs to the SELO family. The cofactor is Mg(2+). Mn(2+) is required as a cofactor.

It catalyses the reaction L-seryl-[protein] + ATP = 3-O-(5'-adenylyl)-L-seryl-[protein] + diphosphate. The enzyme catalyses L-threonyl-[protein] + ATP = 3-O-(5'-adenylyl)-L-threonyl-[protein] + diphosphate. The catalysed reaction is L-tyrosyl-[protein] + ATP = O-(5'-adenylyl)-L-tyrosyl-[protein] + diphosphate. It carries out the reaction L-histidyl-[protein] + UTP = N(tele)-(5'-uridylyl)-L-histidyl-[protein] + diphosphate. It catalyses the reaction L-seryl-[protein] + UTP = O-(5'-uridylyl)-L-seryl-[protein] + diphosphate. The enzyme catalyses L-tyrosyl-[protein] + UTP = O-(5'-uridylyl)-L-tyrosyl-[protein] + diphosphate. Functionally, nucleotidyltransferase involved in the post-translational modification of proteins. It can catalyze the addition of adenosine monophosphate (AMP) or uridine monophosphate (UMP) to a protein, resulting in modifications known as AMPylation and UMPylation. This is Protein nucleotidyltransferase YdiU from Vibrio vulnificus (strain YJ016).